The primary structure comprises 359 residues: 3-dehydroquinate synthase (359 aa).

NAD(+) is bound by residues 70-75, 105-109, 129-130, lysine 142, lysine 151, and 169-172; these read DGEQYK, GVIGD, TT, and FYKT. 3 residues coordinate Zn(2+): glutamate 184, histidine 247, and histidine 264.

This sequence belongs to the sugar phosphate cyclases superfamily. Dehydroquinate synthase family. Requires Co(2+) as cofactor. Zn(2+) is required as a cofactor. The cofactor is NAD(+).

The protein resides in the cytoplasm. It carries out the reaction 7-phospho-2-dehydro-3-deoxy-D-arabino-heptonate = 3-dehydroquinate + phosphate. The protein operates within metabolic intermediate biosynthesis; chorismate biosynthesis; chorismate from D-erythrose 4-phosphate and phosphoenolpyruvate: step 2/7. Catalyzes the conversion of 3-deoxy-D-arabino-heptulosonate 7-phosphate (DAHP) to dehydroquinate (DHQ). The polypeptide is 3-dehydroquinate synthase (Francisella tularensis subsp. tularensis (strain WY96-3418)).